The primary structure comprises 355 residues: Uroporphyrinogen decarboxylase (355 aa).

Residues 27-31 (RQAGR), D77, Y154, T209, and H327 each bind substrate.

The protein belongs to the uroporphyrinogen decarboxylase family. In terms of assembly, homodimer.

The protein resides in the cytoplasm. It catalyses the reaction uroporphyrinogen III + 4 H(+) = coproporphyrinogen III + 4 CO2. The protein operates within porphyrin-containing compound metabolism; protoporphyrin-IX biosynthesis; coproporphyrinogen-III from 5-aminolevulinate: step 4/4. In terms of biological role, catalyzes the decarboxylation of four acetate groups of uroporphyrinogen-III to yield coproporphyrinogen-III. The polypeptide is Uroporphyrinogen decarboxylase (Pseudoalteromonas atlantica (strain T6c / ATCC BAA-1087)).